Here is a 96-residue protein sequence, read N- to C-terminus: Large ribosomal subunit protein eL43 (96 aa).

The C4-type zinc finger occupies 41–62 (CPVCAFPKLKRAGTSIWVCDKC).

Belongs to the eukaryotic ribosomal protein eL43 family. Zn(2+) serves as cofactor.

The polypeptide is Large ribosomal subunit protein eL43 (Methanococcus vannielii (strain ATCC 35089 / DSM 1224 / JCM 13029 / OCM 148 / SB)).